The sequence spans 312 residues: Urease accessory protein 7 (312 aa).

Residues 28–86 are disordered; the sequence is QEATGTDSHHAHHHHTPSGASSAISHTHDNMPHDHGQFHDHGPGLWTPEEHGHTHEHLE. Residues 36 to 87 are histine rich nickel-binding domain; it reads HHAHHHHTPSGASSAISHTHDNMPHDHGQFHDHGPGLWTPEEHGHTHEHLEH. A compositionally biased stretch (basic and acidic residues) spans 53–86; sequence HTHDNMPHDHGQFHDHGPGLWTPEEHGHTHEHLE. Residues 115–122 carry the GTP binding P-loop motif; the sequence is GPVGSGKT. The Switch domain 1 motif lies at 147–154; that stretch reads TREDQEFL. A switch domain 2 motif is present at residues 171 to 172; that stretch reads GG.

It belongs to the SIMIBI class G3E GTPase family. UreG subfamily. In terms of assembly, URE4, URE6 and URE7 may form a complex that acts as a GTP-hydrolysis-dependent molecular chaperone, activating the urease apoprotein URE1.

In terms of biological role, urease accessory protein that binds 2 nickel atoms likely via its conserved histidine-rich domain and supplies nickel for the functional urease URE1. Has probably a dual function as a nickel chaperone and GTPase. Plays a role in host brain invasion. The protein is Urease accessory protein 7 of Cryptococcus neoformans var. grubii serotype A (strain H99 / ATCC 208821 / CBS 10515 / FGSC 9487) (Filobasidiella neoformans var. grubii).